The primary structure comprises 773 residues: LON peptidase N-terminal domain and RING finger protein 1 (773 aa).

Residues 1-29 (MSSPAVARTSPGGSREMAPAPQGRGRFWE) form a disordered region. One copy of the TPR 1 repeat lies at 48–81 (WELLLRRGELLALGGHLKGALEAFAAALRRGAPA). Residues 123–159 (CLGCRGFLSEPVTVPCGHSYCRRCLRRELRARCRLCR) form an RING-type 1 zinc finger. TPR repeat units lie at residues 212 to 244 (ARAA…EPSD), 246 to 278 (IVKI…LPDW), and 279 to 312 (PEVY…DEDF). Residues 359–370 (EESQSLNEPSPK) show a composition bias toward polar residues. The tract at residues 359–388 (EESQSLNEPSPKQSEEIPEVTSEPVKGSLN) is disordered. The residue at position 431 (Ser431) is a Phosphoserine. The segment at 479–517 (CSLCMRLFFEPVTTPCGHSFCKNCLERCLDHAPYCPLCK) adopts an RING-type 2 zinc-finger fold. One can recognise a Lon N-terminal domain in the interval 558–768 (TAELSHLTKN…KIQHILTYFS (211 aa)).

In Homo sapiens (Human), this protein is LON peptidase N-terminal domain and RING finger protein 1 (LONRF1).